The chain runs to 344 residues: N-acetyl-gamma-glutamyl-phosphate reductase (344 aa).

C148 is an active-site residue.

This sequence belongs to the NAGSA dehydrogenase family. Type 1 subfamily.

The protein localises to the cytoplasm. The catalysed reaction is N-acetyl-L-glutamate 5-semialdehyde + phosphate + NADP(+) = N-acetyl-L-glutamyl 5-phosphate + NADPH + H(+). It functions in the pathway amino-acid biosynthesis; L-arginine biosynthesis; N(2)-acetyl-L-ornithine from L-glutamate: step 3/4. Its function is as follows. Catalyzes the NADPH-dependent reduction of N-acetyl-5-glutamyl phosphate to yield N-acetyl-L-glutamate 5-semialdehyde. This chain is N-acetyl-gamma-glutamyl-phosphate reductase, found in Geobacillus thermodenitrificans (strain NG80-2).